The following is an 893-amino-acid chain: UPF0182 protein CLD_0809 (893 aa).

7 consecutive transmembrane segments (helical) span residues 9–29 (IPLFIIILFIAFFNKIINFII), 49–69 (AIIILMIPIFIIFFISIWMYY), 94–114 (LFFIFNFIVSIFLAYIFSSSY), 154–174 (VIISLLLFLVITTFIAYFILE), 202–222 (LAIVSGLIILFISFGHLIKIW), 246–266 (FYKIIVVITLISSIVTLLSIV), and 273–293 (VSICIGITIFLIVSQNIASFL).

This sequence belongs to the UPF0182 family.

Its subcellular location is the cell membrane. In Clostridium botulinum (strain Okra / Type B1), this protein is UPF0182 protein CLD_0809.